Consider the following 256-residue polypeptide: MYQVDLNSDIGESFGAYELGMDGEVVKYITSANIACGWHAGDPMVMEKTVQAAIRNKVAIGAHPGFPDLMGFGRRNMVVTQEEAKAYVKYQIGALWAFTKAAGVAIQHVKPHGALYNMAAKDEGLAKAIAEAVYEIDPNIILVGLANSKMTEVGEKLGLKVAHEVFADRAYNSDGTLVSRNTKGAVIHDSDLAVARVVRMIKKGKVEAINGEDVSIKAHSICVHGDNEHALEFVNKIRETLGKEEIQVISMDALLK.

Belongs to the LamB/PxpA family. In terms of assembly, forms a complex composed of PxpA, PxpB and PxpC.

It catalyses the reaction 5-oxo-L-proline + ATP + 2 H2O = L-glutamate + ADP + phosphate + H(+). Its function is as follows. Catalyzes the cleavage of 5-oxoproline to form L-glutamate coupled to the hydrolysis of ATP to ADP and inorganic phosphate. This is 5-oxoprolinase subunit A from Alkaliphilus metalliredigens (strain QYMF).